Here is a 185-residue protein sequence, read N- to C-terminus: Probable RNA 2'-phosphotransferase (185 aa).

It belongs to the KptA/TPT1 family.

In terms of biological role, removes the 2'-phosphate from RNA via an intermediate in which the phosphate is ADP-ribosylated by NAD followed by a presumed transesterification to release the RNA and generate ADP-ribose 1''-2''-cyclic phosphate (APPR&gt;P). May function as an ADP-ribosylase. This chain is Probable RNA 2'-phosphotransferase, found in Rhizobium rhizogenes (strain K84 / ATCC BAA-868) (Agrobacterium radiobacter).